The chain runs to 99 residues: NADH-quinone oxidoreductase subunit K (99 aa).

Transmembrane regions (helical) follow at residues 3 to 23 (PMYY…GVLL), 28 to 48 (IIVF…LVTF), and 62 to 82 (FFVM…IVAI).

The protein belongs to the complex I subunit 4L family. In terms of assembly, NDH-1 is composed of 14 different subunits. Subunits NuoA, H, J, K, L, M, N constitute the membrane sector of the complex.

Its subcellular location is the cell membrane. It carries out the reaction a quinone + NADH + 5 H(+)(in) = a quinol + NAD(+) + 4 H(+)(out). Functionally, NDH-1 shuttles electrons from NADH, via FMN and iron-sulfur (Fe-S) centers, to quinones in the respiratory chain. The immediate electron acceptor for the enzyme in this species is believed to be a menaquinone. Couples the redox reaction to proton translocation (for every two electrons transferred, four hydrogen ions are translocated across the cytoplasmic membrane), and thus conserves the redox energy in a proton gradient. This chain is NADH-quinone oxidoreductase subunit K, found in Acidothermus cellulolyticus (strain ATCC 43068 / DSM 8971 / 11B).